The primary structure comprises 124 residues: Putative C(50) carotenoid beta-cyclase subunit A (124 aa).

The next 3 helical transmembrane spans lie at 1–21 (MIGL…LVID), 34–54 (AAAL…VLGV), and 78–98 (FEEV…AAGV).

Belongs to the lycopene beta-cyclase family. As to quaternary structure, may form a complex with LbtBC.

The protein resides in the cell membrane. It functions in the pathway carotenoid biosynthesis. In terms of biological role, involved in the biosynthesis of C(50) beta-cyclic carotenoids. May have C(50) carotenoid beta-cyclase activity and produce the C(50) beta-cyclic carotenoid C.p.450 from the C(50) carotenoid dihydrobisanhydrobacterioruberin (DH-BABR). This is Putative C(50) carotenoid beta-cyclase subunit A from Dietzia sp. (strain CQ4).